The following is a 736-amino-acid chain: NADPH--cytochrome P450 reductase (736 aa).

A topological domain (lumenal) is located at residue Met1. A helical transmembrane segment spans residues 2–24 (AVSSSSDVIVLSVGIILAALYLF). Topologically, residues 25–736 (REQIFSAAKP…RNRLLLDVWS (712 aa)) are cytoplasmic. Residues 66–216 (IVIFYGSQTG…DYLEWKDGMW (151 aa)) enclose the Flavodoxin-like domain. Residues 72–77 (SQTGTA), 123–126 (ATYG), 165–174 (LGNKTYEHYN), and Asp200 each bind FMN. The region spanning 269 to 546 (KNPYPAPIIA…EGPRGAYKQG (278 aa)) is the FAD-binding FR-type domain. Arg289 provides a ligand contact to NADP(+). Residues 456 to 459 (RYYS), 474 to 476 (TVV), Tyr480, and 495 to 498 (GVGS) contribute to the FAD site. NADP(+) contacts are provided by residues Thr577, 648 to 649 (SR), and 659 to 663 (KIYVQ). Trp735 is a binding site for FAD.

This sequence belongs to the NADPH--cytochrome P450 reductase family. It in the N-terminal section; belongs to the flavodoxin family. In the C-terminal section; belongs to the flavoprotein pyridine nucleotide cytochrome reductase family. FAD serves as cofactor. Requires FMN as cofactor.

The protein localises to the endoplasmic reticulum membrane. It localises to the mitochondrion outer membrane. It is found in the cell membrane. The catalysed reaction is 2 oxidized [cytochrome P450] + NADPH = 2 reduced [cytochrome P450] + NADP(+) + H(+). In terms of biological role, this enzyme is required for electron transfer from NADP to cytochrome P450 in microsomes. It can also provide electron transfer to heme oxygenase and cytochrome B5. Involved in ergosterol biosynthesis. The sequence is that of NADPH--cytochrome P450 reductase (CPR) from Phanerodontia chrysosporium (White-rot fungus).